The following is a 135-amino-acid chain: Large ribosomal subunit protein uL16c (135 aa).

An N-methylmethionine modification is found at Met-1.

As to quaternary structure, component of the chloroplast large ribosomal subunit (LSU). Mature 70S chloroplast ribosomes of higher plants consist of a small (30S) and a large (50S) subunit. The 30S small subunit contains 1 molecule of ribosomal RNA (16S rRNA) and 24 different proteins. The 50S large subunit contains 3 rRNA molecules (23S, 5S and 4.5S rRNA) and 33 different proteins. Post-translationally, partially alpha-N-monomethylated at Met-1 (10%), whereas 90% of it is blocked to Edman degradation, probably by trimethylation.

It localises to the plastid. The protein resides in the chloroplast. Functionally, component of the chloroplast ribosome (chloro-ribosome), a dedicated translation machinery responsible for the synthesis of chloroplast genome-encoded proteins, including proteins of the transcription and translation machinery and components of the photosynthetic apparatus. This is Large ribosomal subunit protein uL16c from Spinacia oleracea (Spinach).